Here is an 88-residue protein sequence, read N- to C-terminus: Thioredoxin-2 (88 aa).

The region spanning 2-88 (SRVIHISSNE…YRNGAKVSEF (87 aa)) is the Thioredoxin domain. Residues Cys-31 and Cys-34 each act as nucleophile in the active site. A disulfide bond links Cys-31 and Cys-34.

Belongs to the thioredoxin family.

Its function is as follows. Participates in various redox reactions through the reversible oxidation of its active center dithiol to a disulfide and catalyzes dithiol-disulfide exchange reactions. This is Thioredoxin-2 (trxB) from Dictyostelium discoideum (Social amoeba).